Reading from the N-terminus, the 156-residue chain is Small ribosomal subunit protein uS7 (156 aa).

Belongs to the universal ribosomal protein uS7 family. Part of the 30S ribosomal subunit. Contacts proteins S9 and S11.

Functionally, one of the primary rRNA binding proteins, it binds directly to 16S rRNA where it nucleates assembly of the head domain of the 30S subunit. Is located at the subunit interface close to the decoding center, probably blocks exit of the E-site tRNA. The sequence is that of Small ribosomal subunit protein uS7 from Agrobacterium fabrum (strain C58 / ATCC 33970) (Agrobacterium tumefaciens (strain C58)).